Consider the following 496-residue polypeptide: Membrane-bound lytic murein transglycosylase F (496 aa).

Residues 1 to 31 (MPIFSTRVLTYLRCIFRLFIGLMLLLTLVGC) form the signal peptide. The interval 32–271 (DFYTPSSQLE…KLDEKYFGHV (240 aa)) is non-LT domain. An LT domain region spans residues 273-496 (NFDFVDTRTF…AEVVKQITLR (224 aa)). E316 is an active-site residue. Positions 464–485 (HRREELDEDDSSEPQSTERPTV) are disordered.

The protein in the N-terminal section; belongs to the bacterial solute-binding protein 3 family. It in the C-terminal section; belongs to the transglycosylase Slt family.

The protein localises to the cell outer membrane. The catalysed reaction is Exolytic cleavage of the (1-&gt;4)-beta-glycosidic linkage between N-acetylmuramic acid (MurNAc) and N-acetylglucosamine (GlcNAc) residues in peptidoglycan, from either the reducing or the non-reducing ends of the peptidoglycan chains, with concomitant formation of a 1,6-anhydrobond in the MurNAc residue.. Functionally, murein-degrading enzyme that degrades murein glycan strands and insoluble, high-molecular weight murein sacculi, with the concomitant formation of a 1,6-anhydromuramoyl product. Lytic transglycosylases (LTs) play an integral role in the metabolism of the peptidoglycan (PG) sacculus. Their lytic action creates space within the PG sacculus to allow for its expansion as well as for the insertion of various structures such as secretion systems and flagella. The polypeptide is Membrane-bound lytic murein transglycosylase F (Aeromonas salmonicida (strain A449)).